Here is a 303-residue protein sequence, read N- to C-terminus: Sulfate adenylyltransferase subunit 2 (303 aa).

The interval 281 to 303 is disordered; it reads RQGRVIDHDSSGSMEKKKQEGYF.

Belongs to the PAPS reductase family. CysD subfamily. Heterodimer composed of CysD, the smaller subunit, and CysN.

It catalyses the reaction sulfate + ATP + H(+) = adenosine 5'-phosphosulfate + diphosphate. Its pathway is sulfur metabolism; hydrogen sulfide biosynthesis; sulfite from sulfate: step 1/3. In terms of biological role, with CysN forms the ATP sulfurylase (ATPS) that catalyzes the adenylation of sulfate producing adenosine 5'-phosphosulfate (APS) and diphosphate, the first enzymatic step in sulfur assimilation pathway. APS synthesis involves the formation of a high-energy phosphoric-sulfuric acid anhydride bond driven by GTP hydrolysis by CysN coupled to ATP hydrolysis by CysD. This Saccharophagus degradans (strain 2-40 / ATCC 43961 / DSM 17024) protein is Sulfate adenylyltransferase subunit 2.